Reading from the N-terminus, the 788-residue chain is Response regulator SSK1 (788 aa).

Positions 534-691 (NVLIVEDNII…WLERKVKEWG (158 aa)) constitute a Response regulatory domain. Aspartate 583 carries the 4-aspartylphosphate modification.

Belongs to the SSK1 family.

It localises to the cytoplasm. Two-domain response regulator protein in the two-component signal transduction system of the HOG1 pathway. Controls high-osmolarity adaptation and fungicide sensitivity via its regulation of the phosphorylation of HOG1. The chain is Response regulator SSK1 from Cochliobolus heterostrophus (strain C5 / ATCC 48332 / race O) (Southern corn leaf blight fungus).